A 373-amino-acid chain; its full sequence is Dual-specificity RNA methyltransferase RlmN (373 aa).

Glu94 (proton acceptor) is an active-site residue. One can recognise a Radical SAM core domain in the interval 100-339; sequence EDDRATLCVS…VIVRKTRGDD (240 aa). Cys107 and Cys344 are oxidised to a cystine. [4Fe-4S] cluster-binding residues include Cys114, Cys118, and Cys121. Residues 168-169, Ser200, 222-224, and Asn301 each bind S-adenosyl-L-methionine; these read GE and SIH. Cys344 serves as the catalytic S-methylcysteine intermediate.

It belongs to the radical SAM superfamily. RlmN family. The cofactor is [4Fe-4S] cluster.

The protein localises to the cytoplasm. It catalyses the reaction adenosine(2503) in 23S rRNA + 2 reduced [2Fe-2S]-[ferredoxin] + 2 S-adenosyl-L-methionine = 2-methyladenosine(2503) in 23S rRNA + 5'-deoxyadenosine + L-methionine + 2 oxidized [2Fe-2S]-[ferredoxin] + S-adenosyl-L-homocysteine. It carries out the reaction adenosine(37) in tRNA + 2 reduced [2Fe-2S]-[ferredoxin] + 2 S-adenosyl-L-methionine = 2-methyladenosine(37) in tRNA + 5'-deoxyadenosine + L-methionine + 2 oxidized [2Fe-2S]-[ferredoxin] + S-adenosyl-L-homocysteine. Functionally, specifically methylates position 2 of adenine 2503 in 23S rRNA and position 2 of adenine 37 in tRNAs. m2A2503 modification seems to play a crucial role in the proofreading step occurring at the peptidyl transferase center and thus would serve to optimize ribosomal fidelity. The polypeptide is Dual-specificity RNA methyltransferase RlmN (Shewanella oneidensis (strain ATCC 700550 / JCM 31522 / CIP 106686 / LMG 19005 / NCIMB 14063 / MR-1)).